A 95-amino-acid chain; its full sequence is Aspartyl/glutamyl-tRNA(Asn/Gln) amidotransferase subunit C (95 aa).

It belongs to the GatC family. Heterotrimer of A, B and C subunits.

It carries out the reaction L-glutamyl-tRNA(Gln) + L-glutamine + ATP + H2O = L-glutaminyl-tRNA(Gln) + L-glutamate + ADP + phosphate + H(+). The enzyme catalyses L-aspartyl-tRNA(Asn) + L-glutamine + ATP + H2O = L-asparaginyl-tRNA(Asn) + L-glutamate + ADP + phosphate + 2 H(+). Functionally, allows the formation of correctly charged Asn-tRNA(Asn) or Gln-tRNA(Gln) through the transamidation of misacylated Asp-tRNA(Asn) or Glu-tRNA(Gln) in organisms which lack either or both of asparaginyl-tRNA or glutaminyl-tRNA synthetases. The reaction takes place in the presence of glutamine and ATP through an activated phospho-Asp-tRNA(Asn) or phospho-Glu-tRNA(Gln). The sequence is that of Aspartyl/glutamyl-tRNA(Asn/Gln) amidotransferase subunit C from Desulforapulum autotrophicum (strain ATCC 43914 / DSM 3382 / VKM B-1955 / HRM2) (Desulfobacterium autotrophicum).